The chain runs to 249 residues: Small ribosomal subunit protein eS6 (249 aa).

2 disordered regions span residues 161-181 (PLAK…RLVT) and 194-249 (LKKQ…SSQK). Residues 216 to 229 (RSKEAKEKRQEQIA) are compositionally biased toward basic and acidic residues. Residues Ser-235, Ser-236, Ser-240, Ser-244, and Ser-247 each carry the phosphoserine modification. The segment covering 236-249 (SLRASTSKSESSQK) has biased composition (low complexity).

It belongs to the eukaryotic ribosomal protein eS6 family. As to quaternary structure, component of the small ribosomal subunit. Part of the small subunit (SSU) processome, composed of more than 70 proteins and the RNA chaperone small nucleolar RNA (snoRNA) U3. In terms of processing, ribosomal protein S6 is the major substrate of protein kinases in eukaryote ribosomes. The phosphorylation is stimulated by growth factors, tumor promoting agents, and mitogens. It is dephosphorylated at growth arrest.

Its subcellular location is the cytoplasm. It is found in the nucleus. The protein localises to the nucleolus. Functionally, component of the 40S small ribosomal subunit. Plays an important role in controlling cell growth and proliferation through the selective translation of particular classes of mRNA. Part of the small subunit (SSU) processome, first precursor of the small eukaryotic ribosomal subunit. During the assembly of the SSU processome in the nucleolus, many ribosome biogenesis factors, an RNA chaperone and ribosomal proteins associate with the nascent pre-rRNA and work in concert to generate RNA folding, modifications, rearrangements and cleavage as well as targeted degradation of pre-ribosomal RNA by the RNA exosome. This is Small ribosomal subunit protein eS6 (rps6) from Xenopus laevis (African clawed frog).